A 590-amino-acid polypeptide reads, in one-letter code: G protein-coupled receptor kinase 5 (590 aa).

The N-terminal stretch occupies residues 1-185; the sequence is MELENIVANT…LERQPVTKNT (185 aa). An interaction with calmodulin region spans residues 20-39; sequence GGKRKGKSKKWKEILKFPHI. The region spanning 53–171 is the RGS domain; that stretch reads YYSLCDKQPI…LDSMYFDRFL (119 aa). A Phosphoserine modification is found at serine 136. One can recognise a Protein kinase domain in the interval 186–448; the sequence is FRQYRVLGKG…AAEVKRHPFF (263 aa). ATP-binding positions include 192–200 and lysine 215; that span reads LGKGGFGEV. The active-site Proton acceptor is aspartate 311. Residues 388 to 395 carry the Nuclear localization signal motif; sequence RKEKVKRE. Residues 449-514 form the AGC-kinase C-terminal domain; that stretch reads RNMNFKRLEA…GSVPIPWQNE (66 aa). The residue at position 484 (serine 484) is a Phosphoserine; by autocatalysis. Threonine 485 bears the Phosphothreonine; by autocatalysis mark. The tract at residues 546 to 565 is sufficient for membrane localization; sequence PKKGLFHRLFRRQHQSNSKS. Residues 557-590 are disordered; it reads RQHQSNSKSSPTPKTSCNHRINSNHINSNSTGSS. The segment covering 561-590 has biased composition (low complexity); that stretch reads SNSKSSPTPKTSCNHRINSNHINSNSTGSS. At serine 579 the chain carries Phosphoserine.

It belongs to the protein kinase superfamily. AGC Ser/Thr protein kinase family. GPRK subfamily. In terms of assembly, interacts with ST13 (via the C-terminus 303-319 AA). Interacts with TP53/p53. Interacts with HTR4 (via C-terminus 330-346 AA); this interaction is promoted by 5-HT (serotonin). Interacts with HDAC5. Interacts with GIT1. In terms of processing, autophosphorylated. Autophosphorylation may play a critical role in the regulation of GRK5 kinase activity.

Its subcellular location is the cytoplasm. It is found in the nucleus. The protein resides in the cell membrane. It carries out the reaction [G-protein-coupled receptor] + ATP = [G-protein-coupled receptor]-phosphate + ADP + H(+). With respect to regulation, inhibited by calmodulin with an IC(50) of 50 nM. Calmodulin inhibits GRK5 association with receptor and phospholipid. Serine/threonine kinase that phosphorylates preferentially the activated forms of a variety of G-protein-coupled receptors (GPCRs). Such receptor phosphorylation initiates beta-arrestin-mediated receptor desensitization, internalization, and signaling events leading to their down-regulation. Phosphorylates a variety of GPCRs, including adrenergic receptors, muscarinic acetylcholine receptors (more specifically Gi-coupled M2/M4 subtypes), dopamine receptors and opioid receptors. In addition to GPCRs, also phosphorylates various substrates: Hsc70-interacting protein/ST13, TP53/p53, HDAC5, and arrestin-1/ARRB1. Phosphorylation of ARRB1 by GRK5 inhibits G-protein independent MAPK1/MAPK3 signaling downstream of 5HT4-receptors. Phosphorylation of HDAC5, a repressor of myocyte enhancer factor 2 (MEF2) leading to nuclear export of HDAC5 and allowing MEF2-mediated transcription. Phosphorylation of TP53/p53, a crucial tumor suppressor, inhibits TP53/p53-mediated apoptosis. Phosphorylation of ST13 regulates internalization of the chemokine receptor. Phosphorylates rhodopsin (RHO) (in vitro) and a non G-protein-coupled receptor, LRP6 during Wnt signaling (in vitro). This Mus musculus (Mouse) protein is G protein-coupled receptor kinase 5 (Grk5).